The sequence spans 269 residues: Formamidopyrimidine-DNA glycosylase (269 aa).

P2 (schiff-base intermediate with DNA) is an active-site residue. E3 (proton donor) is an active-site residue. K57 serves as the catalytic Proton donor; for beta-elimination activity. DNA contacts are provided by H90, R109, and K150. The FPG-type zinc-finger motif lies at 235 to 269 (LVYGKAGEPCPECGEPLQELKIGQRNTFFCNECQQ). R259 acts as the Proton donor; for delta-elimination activity in catalysis.

The protein belongs to the FPG family. As to quaternary structure, monomer. Zn(2+) serves as cofactor.

The catalysed reaction is Hydrolysis of DNA containing ring-opened 7-methylguanine residues, releasing 2,6-diamino-4-hydroxy-5-(N-methyl)formamidopyrimidine.. It catalyses the reaction 2'-deoxyribonucleotide-(2'-deoxyribose 5'-phosphate)-2'-deoxyribonucleotide-DNA = a 3'-end 2'-deoxyribonucleotide-(2,3-dehydro-2,3-deoxyribose 5'-phosphate)-DNA + a 5'-end 5'-phospho-2'-deoxyribonucleoside-DNA + H(+). Functionally, involved in base excision repair of DNA damaged by oxidation or by mutagenic agents. Acts as a DNA glycosylase that recognizes and removes damaged bases. Has a preference for oxidized purines, such as 7,8-dihydro-8-oxoguanine (8-oxoG). Has AP (apurinic/apyrimidinic) lyase activity and introduces nicks in the DNA strand. Cleaves the DNA backbone by beta-delta elimination to generate a single-strand break at the site of the removed base with both 3'- and 5'-phosphates. This is Formamidopyrimidine-DNA glycosylase from Vibrio parahaemolyticus serotype O3:K6 (strain RIMD 2210633).